A 394-amino-acid chain; its full sequence is Quinolinate synthase (394 aa).

Iminosuccinate contacts are provided by His67 and Ser84. Cys131 contributes to the [4Fe-4S] cluster binding site. Iminosuccinate-binding positions include 163–165 (YMN) and Ser184. Cys254 contributes to the [4Fe-4S] cluster binding site. Residues 280–282 (HPE) and Thr297 contribute to the iminosuccinate site. Cys346 serves as a coordination point for [4Fe-4S] cluster.

The protein belongs to the quinolinate synthase family. Type 3 subfamily. [4Fe-4S] cluster serves as cofactor.

The protein localises to the cytoplasm. It catalyses the reaction iminosuccinate + dihydroxyacetone phosphate = quinolinate + phosphate + 2 H2O + H(+). The protein operates within cofactor biosynthesis; NAD(+) biosynthesis; quinolinate from iminoaspartate: step 1/1. Functionally, catalyzes the condensation of iminoaspartate with dihydroxyacetone phosphate to form quinolinate. The polypeptide is Quinolinate synthase (Streptomyces coelicolor (strain ATCC BAA-471 / A3(2) / M145)).